Here is a 909-residue protein sequence, read N- to C-terminus: Probable dipeptidyl-aminopeptidase B (909 aa).

The tract at residues 1–63 (MRVGSRINDE…HNHNGRAQGN (63 aa)) is disordered. Topologically, residues 1–94 (MRVGSRINDE…NGKSNQRRTL (94 aa)) are cytoplasmic. Residues 27-38 (DSSSTASISLTL) show a composition bias toward low complexity. The chain crosses the membrane as a helical; Signal-anchor for type II membrane protein span at residues 95 to 115 (IVFWLLVALCVGGWAVAFLFF). Residues 116–909 (VTSPGNKTST…YSNFLPIRSF (794 aa)) lie on the Vacuolar side of the membrane. The N-linked (GlcNAc...) asparagine glycan is linked to Asn-121. Residues 123 to 134 (TSTSPHSGSNSP) show a composition bias toward polar residues. Positions 123–144 (TSTSPHSGSNSPEGDVTKPGIP) are disordered. N-linked (GlcNAc...) asparagine glycans are attached at residues Asn-207, Asn-303, and Asn-355. Ser-760 acts as the Charge relay system in catalysis. 3 N-linked (GlcNAc...) asparagine glycosylation sites follow: Asn-814, Asn-819, and Asn-822. Active-site charge relay system residues include Asp-837 and His-870. The N-linked (GlcNAc...) asparagine glycan is linked to Asn-888.

Belongs to the peptidase S9B family.

It is found in the vacuole membrane. It catalyses the reaction Release of an N-terminal dipeptide, Xaa-Yaa-|-Zaa-, from a polypeptide, preferentially when Yaa is Pro, provided Zaa is neither Pro nor hydroxyproline.. Its function is as follows. Type IV dipeptidyl-peptidase which removes N-terminal dipeptides sequentially from polypeptides having unsubstituted N-termini provided that the penultimate residue is proline. The polypeptide is Probable dipeptidyl-aminopeptidase B (DAPB) (Arthroderma benhamiae (strain ATCC MYA-4681 / CBS 112371) (Trichophyton mentagrophytes)).